We begin with the raw amino-acid sequence, 469 residues long: Glutamate--tRNA ligase 1 (469 aa).

A 'HIGH' region motif is present at residues 9-19 (PSPTGYLHVGG). 4 residues coordinate Zn(2+): Cys-98, Cys-100, Cys-125, and Glu-127. The short motif at 236–240 (RLSKR) is the 'KMSKS' region element. Lys-239 contacts ATP.

It belongs to the class-I aminoacyl-tRNA synthetase family. Glutamate--tRNA ligase type 1 subfamily. In terms of assembly, monomer. Zn(2+) is required as a cofactor.

It is found in the cytoplasm. It catalyses the reaction tRNA(Glu) + L-glutamate + ATP = L-glutamyl-tRNA(Glu) + AMP + diphosphate. Its function is as follows. Catalyzes the attachment of glutamate to tRNA(Glu) in a two-step reaction: glutamate is first activated by ATP to form Glu-AMP and then transferred to the acceptor end of tRNA(Glu). This Nitrosococcus oceani (strain ATCC 19707 / BCRC 17464 / JCM 30415 / NCIMB 11848 / C-107) protein is Glutamate--tRNA ligase 1.